The following is a 150-amino-acid chain: Avidin-related protein 4/5 (150 aa).

Residues 1-24 (MVHTTSPLLLLLLLSLALVAPSLS) form the signal peptide. The region spanning 26–147 (RKCSLTGKWT…GYNNFTRLCT (122 aa)) is the Avidin-like domain. Residues Cys28 and Cys105 are joined by a disulfide bond. Residues Asn36, Ser40, Tyr57, Thr59, and Asp63 each contribute to the biotin site. Asn67 and Asn93 each carry an N-linked (GlcNAc...) asparagine glycan. Residues Ser95 and Asn140 each contribute to the biotin site. N-linked (GlcNAc...) asparagine glycosylation occurs at Asn141.

This sequence belongs to the avidin/streptavidin family. Homotetramer.

It localises to the secreted. Functionally, forms a strong non-covalent specific complex with biotin. The polypeptide is Avidin-related protein 4/5 (AVR4) (Gallus gallus (Chicken)).